A 252-amino-acid polypeptide reads, in one-letter code: Putative teichuronic acid biosynthesis glycosyltransferase TuaG (252 aa).

The protein belongs to the glycosyltransferase 2 family.

It participates in cell wall biogenesis; teichuronic acid biosynthesis. In Bacillus subtilis (strain 168), this protein is Putative teichuronic acid biosynthesis glycosyltransferase TuaG (tuaG).